A 346-amino-acid chain; its full sequence is GPALPP motifs-containing protein 1 (346 aa).

Disordered regions lie at residues 1-283 (MARD…ESLM) and 289-308 (KLKS…IPFD). Alanine 2 bears the N-acetylalanine mark. Positions 7 to 12 (GPALPP) match the GPALPP motif 1 motif. At serine 28 the chain carries Phosphoserine. Positions 32 to 37 (GPALPP) match the GPALPP motif 2 motif. Residues 60–69 (GNQESEEEDT) are compositionally biased toward acidic residues. The short motif at 91–96 (GPALPP) is the GPALPP motif 3 element. Residue serine 104 is modified to Phosphoserine. The span at 106–115 (PRPIIGPALP) shows a compositional bias: pro residues. Residues 111–116 (GPALPP) carry the GPALPP motif 4 motif. A compositionally biased stretch (basic and acidic residues) spans 123–132 (QKNDKGREDP). Residues serine 136, serine 141, and serine 146 each carry the phosphoserine modification. The segment covering 142 to 152 (EEAESGEDEDI) has biased composition (acidic residues). 2 stretches are compositionally biased toward basic and acidic residues: residues 169–193 (EFEK…KPIT) and 233–267 (PADR…KRLA). A Glycyl lysine isopeptide (Lys-Gly) (interchain with G-Cter in SUMO2) cross-link involves residue lysine 277. A compositionally biased stretch (basic and acidic residues) spans 293 to 308 (KAAEDKNKHQERIPFD). Residue lysine 314 forms a Glycyl lysine isopeptide (Lys-Gly) (interchain with G-Cter in SUMO2) linkage.

The chain is GPALPP motifs-containing protein 1 (Gpalpp1) from Mus musculus (Mouse).